The primary structure comprises 46 residues: Mu-segestritoxin-Sf1g (46 aa).

Intrachain disulfides connect C3/C19, C10/C22, C18/C42, and C24/C40. Residues 31-33 form a keys region for toxin activity region; the sequence is RPW.

Belongs to the neurotoxin 16 (SFI) family. As to expression, expressed by the venom gland.

Its subcellular location is the secreted. Its function is as follows. Insecticidal toxin. It inhibits insect voltage-gated sodium channels (Nav) by partially blocking the channel pore in DUM neurons from the American cockroach, not by acting as a gating modifier. The inhibition is only partially reversible after prolonged washout. In vivo, the toxin causes flaccid paralysis followed by death when injected into Heliothis virescens larvae. It also causes uncoordinated movements followed by full paralysis to sheep blowflies (Lucilia cuprina). When the toxin is fused to snowdrop lectin, it is orally active against larvae of the tomato moth (Laconobia oleracea), the rice brown planthopper (Nilaparvata lugens), and the peach-potato aphid (Myzus persicae). The chain is Mu-segestritoxin-Sf1g from Segestria florentina (Tube-web spider).